Here is a 172-residue protein sequence, read N- to C-terminus: Large ribosomal subunit protein uL16 (172 aa).

It belongs to the universal ribosomal protein uL16 family.

The chain is Large ribosomal subunit protein uL16 from Methanocella arvoryzae (strain DSM 22066 / NBRC 105507 / MRE50).